The primary structure comprises 489 residues: Ketol-acid reductoisomerase (NADP(+)) (489 aa).

The KARI N-terminal Rossmann domain maps to 16-207 (IKKCRFMEKK…GGHRAGVLES (192 aa)). NADP(+) contacts are provided by residues 44-47 (CGSQ), R67, S77, and 107-109 (DKQ). The active site involves H131. An NADP(+)-binding site is contributed by G157. KARI C-terminal knotted domains are found at residues 208–343 (SFVA…QSPD) and 344–483 (YDKK…MKNM). Positions 216, 220, 388, and 392 each coordinate Mg(2+). S413 contributes to the substrate binding site.

Belongs to the ketol-acid reductoisomerase family. Requires Mg(2+) as cofactor.

The enzyme catalyses (2R)-2,3-dihydroxy-3-methylbutanoate + NADP(+) = (2S)-2-acetolactate + NADPH + H(+). The catalysed reaction is (2R,3R)-2,3-dihydroxy-3-methylpentanoate + NADP(+) = (S)-2-ethyl-2-hydroxy-3-oxobutanoate + NADPH + H(+). Its pathway is amino-acid biosynthesis; L-isoleucine biosynthesis; L-isoleucine from 2-oxobutanoate: step 2/4. It functions in the pathway amino-acid biosynthesis; L-valine biosynthesis; L-valine from pyruvate: step 2/4. Functionally, involved in the biosynthesis of branched-chain amino acids (BCAA). Catalyzes an alkyl-migration followed by a ketol-acid reduction of (S)-2-acetolactate (S2AL) to yield (R)-2,3-dihydroxy-isovalerate. In the isomerase reaction, S2AL is rearranged via a Mg-dependent methyl migration to produce 3-hydroxy-3-methyl-2-ketobutyrate (HMKB). In the reductase reaction, this 2-ketoacid undergoes a metal-dependent reduction by NADPH to yield (R)-2,3-dihydroxy-isovalerate. The chain is Ketol-acid reductoisomerase (NADP(+)) from Buchnera aphidicola subsp. Diuraphis noxia.